A 725-amino-acid polypeptide reads, in one-letter code: MTLSFAHFTYLFTILLGLTNIALASDPETILVTITKTNDANGVVTTTVSPALVSTSTIVQAGTTTLYTTWCPLTVSTSSAAEISPSISYATTLSRFSTLTLSTEVCSHEACPSSSTLPTTTLSVTSKFTSYICPTCHTTAISSLSEVGTTTVVSSSAIEPSSASIISPVTSTLSSTTSSNPTTTSLSSTSTSPSSTSTSPSSTSTSSSSTSTSSSSTSTSSSSTSTSPSSTSTSSSLTSTSSSSTSTSQSSTSTSSSSTSTSPSSTSTSSSSTSTSPSSKSTSASSTSTSSYSTSTSPSLTSSSPTLASTSPSSTSISSTFTDSTSSLGSSIASSSTSVSLYSPSTPVYSVPSTSSNVATPSMTSSTVETTVSSQSSSEYITKSSISTTIPSFSMSTYFTTVSGVTTMYTTWCPYSSESETSTLTSMHETVTTDATVCTHESCMPSQTTSLITSSIKMSTKNVATSVSTSTVESSYACSTCAETSHSYSSVQTASSSSVTQQTTSTKSWVSSMTTSDEDFNKHATGKYHVTSSGTSTISTSVSEATSTSSIDSESQEQSSHLLSTSVLSSSSLSATLSSDSTILLFSSVSSLSVEQSPVTTLQISSTSEILQPTSSTAIATISASTSSLSATSISTPSTSVESTIESSSLTPTVSSIFLSSSSAPSSLQTSVTTTEVSTTSISIQYQTSSMVTISQYMGSGSQTRLPLGKLVFAIMAVACNVIFS.

The first 24 residues, 1–24 (MTLSFAHFTYLFTILLGLTNIALA), serve as a signal peptide directing secretion. A run of 19 repeats spans residues 53–149 (VSTS…EVGT), 182–188 (TTTSLSS), 189–195 (TSTSPSS), 196–202 (TSTSPSS), 203–209 (TSTSSSS), 210–216 (TSTSSSS), 217–223 (TSTSSSS), 224–230 (TSTSPSS), 231–237 (TSTSSSL), 238–244 (TSTSSSS), 245–251 (TSTSQSS), 252–258 (TSTSSSS), 259–265 (TSTSPSS), 266–272 (TSTSSSS), 273–279 (TSTSPSS), 280–286 (KSTSASS), 287–293 (TSTSSYS), 294–300 (TSTSPSL), and 301–307 (TSSSPTL). Positions 53-493 (VSTSTIVQAG…TSHSYSSVQT (441 aa)) are 2 X approximate repeats. 2 disordered regions span residues 168-318 (PVTS…TSIS) and 335-363 (SSTS…TPSM). Positions 182–307 (TTTSLSSTST…PSLTSSSPTL (126 aa)) are 18 X approximate tandem repeats, Ser/Thr-rich. The stretch at 395 to 493 (MSTYFTTVSG…TSHSYSSVQT (99 aa)) is one 1-2 repeat. Glycine 699 carries GPI-anchor amidated glycine lipidation. The propeptide at 700 to 725 (SGSQTRLPLGKLVFAIMAVACNVIFS) is removed in mature form.

As to quaternary structure, heterodimer; disulfide-linked. In terms of processing, extensively O-glycosylated by PMT1 and PMT2. Post-translationally, the GPI-anchor is attached to the protein in the endoplasmic reticulum and serves to target the protein to the cell surface. There, the glucosamine-inositol phospholipid moiety is cleaved off and the GPI-modified mannoprotein is covalently attached via its lipidless GPI glycan remnant to the 1,6-beta-glucan of the outer cell wall layer.

It localises to the secreted. The protein resides in the cell wall. The protein localises to the membrane. In terms of biological role, cell wall anchoring subunit of the a-agglutinin heterodimer. S.cerevisiae a and alpha cells express the complementary cell surface glycoproteins a-agglutinin and alpha-agglutinin, respectively, which interact with one another to promote cellular aggregation during mating. This is A-agglutinin anchorage subunit (AGA1) from Saccharomyces cerevisiae (strain ATCC 204508 / S288c) (Baker's yeast).